The sequence spans 361 residues: Probable U3 small nucleolar RNA-associated protein 11 (361 aa).

4 disordered regions span residues 1-52 (MTKG…KKRK), 200-235 (LMSG…TPET), 262-295 (KRES…TRLL), and 311-361 (RHVR…RRAR). A compositionally biased stretch (basic residues) spans 17-33 (HLKRKTHLERSQPKSRQ). Basic and acidic residues-rich tracts occupy residues 37–46 (QLEKHKDHVL) and 217–228 (RREVQEKMRRSG). Acidic residues predominate over residues 278-287 (DDGEQEEAAA). The segment covering 342-352 (RQMEQRRESRF) has biased composition (basic and acidic residues).

The protein belongs to the UTP11 family. As to quaternary structure, component of the ribosomal small subunit (SSU) processome.

The protein localises to the nucleus. Its subcellular location is the nucleolus. Functionally, involved in nucleolar processing of pre-18S ribosomal RNA. The protein is Probable U3 small nucleolar RNA-associated protein 11 of Leishmania major.